The primary structure comprises 865 residues: Leucine--tRNA ligase (865 aa).

The short motif at 58–68 (PYPSGNLHMGH) is the 'HIGH' region element. Positions 629–633 (KMSKS) match the 'KMSKS' region motif. Lysine 632 contributes to the ATP binding site.

The protein belongs to the class-I aminoacyl-tRNA synthetase family.

The protein resides in the cytoplasm. It catalyses the reaction tRNA(Leu) + L-leucine + ATP = L-leucyl-tRNA(Leu) + AMP + diphosphate. The polypeptide is Leucine--tRNA ligase (Synechococcus elongatus (strain ATCC 33912 / PCC 7942 / FACHB-805) (Anacystis nidulans R2)).